The primary structure comprises 370 residues: Phosphate acyltransferase (370 aa).

Belongs to the PlsX family. Homodimer. Probably interacts with PlsY.

It localises to the cytoplasm. It catalyses the reaction a fatty acyl-[ACP] + phosphate = an acyl phosphate + holo-[ACP]. Its pathway is lipid metabolism; phospholipid metabolism. Catalyzes the reversible formation of acyl-phosphate (acyl-PO(4)) from acyl-[acyl-carrier-protein] (acyl-ACP). This enzyme utilizes acyl-ACP as fatty acyl donor, but not acyl-CoA. The chain is Phosphate acyltransferase from Paracoccus denitrificans (strain Pd 1222).